The chain runs to 433 residues: Trigger factor (433 aa).

The region spanning 161–246 (GDRVTMDFVG…AKKVEARDLP (86 aa)) is the PPIase FKBP-type domain.

The protein belongs to the FKBP-type PPIase family. Tig subfamily.

The protein resides in the cytoplasm. It carries out the reaction [protein]-peptidylproline (omega=180) = [protein]-peptidylproline (omega=0). Its function is as follows. Involved in protein export. Acts as a chaperone by maintaining the newly synthesized protein in an open conformation. Functions as a peptidyl-prolyl cis-trans isomerase. This chain is Trigger factor, found in Idiomarina loihiensis (strain ATCC BAA-735 / DSM 15497 / L2-TR).